Here is a 235-residue protein sequence, read N- to C-terminus: Motile sperm domain-containing protein 3 (235 aa).

Disordered regions lie at residues 1 to 30 (MRRG…PSGP) and 143 to 170 (ELQG…PFPE). Positions 33–145 (PVLVFPPDLV…RAPAYPLELQ (113 aa)) constitute an MSP domain. Transmembrane regions (helical) follow at residues 180–200 (SFLL…LPLQ) and 213–233 (VSLG…MVFL).

Its subcellular location is the membrane. The sequence is that of Motile sperm domain-containing protein 3 (MOSPD3) from Bos taurus (Bovine).